A 670-amino-acid chain; its full sequence is Rhophilin-1 (670 aa).

Positions 1–20 (MILEERPDGAGAGEESPRLQ) are disordered. The region spanning 23–97 (DSLTQIQCGQ…LEELSGGVDP (75 aa)) is the REM-1 domain. S24 is modified (phosphoserine). One can recognise a BRO1 domain in the interval 108–457 (PMIPLGLKET…LAKYAELDRE (350 aa)). The 80-residue stretch at 513–592 (PVHLTRGEGG…ASLQVVSLLP (80 aa)) folds into the PDZ domain. The interval 616 to 670 (QREHGCKTPASTWASPRPLLNWSRKAQQGKTGGCPQPCAPVKPAPPSSLKHPGWP) is disordered. Positions 652–661 (PCAPVKPAPP) are enriched in pro residues.

It belongs to the RHPN family. Binds specifically to GTP-Rho. Interacts with ROPN1.

Its function is as follows. Has no enzymatic activity. May serve as a target for Rho, and interact with some cytoskeletal component upon Rho binding or relay a Rho signal to other molecules. In Homo sapiens (Human), this protein is Rhophilin-1.